Here is a 257-residue protein sequence, read N- to C-terminus: Hydroxyacylglutathione hydrolase (257 aa).

Zn(2+)-binding residues include His53, His55, Asp57, His58, His109, Asp126, and His164.

It belongs to the metallo-beta-lactamase superfamily. Glyoxalase II family. Monomer. Requires Zn(2+) as cofactor.

The catalysed reaction is an S-(2-hydroxyacyl)glutathione + H2O = a 2-hydroxy carboxylate + glutathione + H(+). The protein operates within secondary metabolite metabolism; methylglyoxal degradation; (R)-lactate from methylglyoxal: step 2/2. Its function is as follows. Thiolesterase that catalyzes the hydrolysis of S-D-lactoyl-glutathione to form glutathione and D-lactic acid. In Baumannia cicadellinicola subsp. Homalodisca coagulata, this protein is Hydroxyacylglutathione hydrolase.